The chain runs to 452 residues: Lysine-rich nucleolar protein 1 (452 aa).

Disordered regions lie at residues 1 to 28, 55 to 161, and 184 to 305; these read MITK…VKEP, VIQE…AFSG, and REQA…PDTD. A Glycyl lysine isopeptide (Lys-Gly) (interchain with G-Cter in SUMO2) cross-link involves residue lysine 7. Residues 65–75 are compositionally biased toward basic residues; sequence LVKKKKKKKGH. Positions 78–98 are enriched in basic and acidic residues; that stretch reads ICEEHLEPEITLRAGRTERSH. Residue serine 112 is modified to Phosphoserine. Lysine 126 participates in a covalent cross-link: Glycyl lysine isopeptide (Lys-Gly) (interchain with G-Cter in SUMO2). Residues 127–139 show a composition bias toward basic and acidic residues; it reads TSPDPRQDEEVTR. Serine 128 carries the phosphoserine modification. Basic residues-rich tracts occupy residues 140 to 151 and 258 to 267; these read VGKKLKKHKKEK and SVKKKVKSKK. The residue at position 258 (serine 258) is a Phosphoserine. Lysine 280 is covalently cross-linked (Glycyl lysine isopeptide (Lys-Gly) (interchain with G-Cter in SUMO2)). Acidic residues predominate over residues 293 to 305; it reads VAEEPWEEEPDTD. Positions 300 to 452 are interaction with ZNF106; the sequence is EEPDTDLEVV…NASKSIKFED (153 aa). Threonine 304 is modified (phosphothreonine). Residues lysine 313, lysine 347, lysine 367, lysine 369, and lysine 401 each participate in a glycyl lysine isopeptide (Lys-Gly) (interchain with G-Cter in SUMO2) cross-link. An Omega-N-methylarginine modification is found at arginine 424. Residue lysine 436 forms a Glycyl lysine isopeptide (Lys-Gly) (interchain with G-Cter in SUMO2) linkage.

In terms of assembly, interacts with ZNF106.

The protein localises to the nucleus. It is found in the nucleolus. In Bos taurus (Bovine), this protein is Lysine-rich nucleolar protein 1 (KNOP1).